Here is a 129-residue protein sequence, read N- to C-terminus: Small ribosomal subunit protein uS11 (129 aa).

Belongs to the universal ribosomal protein uS11 family. As to quaternary structure, part of the 30S ribosomal subunit. Interacts with proteins S7 and S18. Binds to IF-3.

In terms of biological role, located on the platform of the 30S subunit, it bridges several disparate RNA helices of the 16S rRNA. Forms part of the Shine-Dalgarno cleft in the 70S ribosome. This is Small ribosomal subunit protein uS11 from Geobacillus sp. (strain WCH70).